A 408-amino-acid polypeptide reads, in one-letter code: MSTVGGIEQLIPDSVSTSFIETVNGSHQFTIQGYSLAKGMSPGKFIQSDIFSVGGYDWAIYFYPDGKNPEDQSSYISLFIALASDSNDIRALFELTLMDQSGKGKHKVHSHFDRALEGGPYTLKYKGSMWGYKRFFKRSALETSDYLKDDCLVINCTVGVVRARLEGPKQYGIVLPLSNMGQGLKDLLDSEVGCDIAFQVGDETYKAHKLILAARSPVFRAQFFGPIGNNNVDRIVIDDIEPSIFKAMLSFIYTDVLPNVHEITGSTSASSFTNMIQHLLAAADLYDLARLKILCEVLLCEKLDVDNVATTLALAEQHQFLQLKAFCLEFVASPANLGAVMKSEGFKHLKQSCPTLLSELLNTVAAADKSSTSGQSNKKRSASSVLGCDTTNVRQLRRRTRKEVRAVS.

An MATH domain is found at 24 to 158; the sequence is NGSHQFTIQG…DDCLVINCTV (135 aa). The BTB domain maps to 194-261; that stretch reads CDIAFQVGDE…IYTDVLPNVH (68 aa).

This sequence belongs to the Tdpoz family. In terms of assembly, homodimer or heterodimer with BPM3 and BPM5. Interacts with CUL3A and CUL3B. Interacts with RAP2-4 and RAP2-13. Binds to MYB56 at the promoter of FLOWERING LOCUS T (FT). As to expression, ubiquitous.

It localises to the nucleus. The protein resides in the cytoplasm. Its pathway is protein modification; protein ubiquitination. Functionally, may act as a substrate-specific adapter of an E3 ubiquitin-protein ligase complex (CUL3-RBX1-BTB) which mediates the ubiquitination and subsequent proteasomal degradation of target proteins. This chain is BTB/POZ and MATH domain-containing protein 3, found in Arabidopsis thaliana (Mouse-ear cress).